We begin with the raw amino-acid sequence, 309 residues long: Homoserine O-succinyltransferase (309 aa).

C142 (acyl-thioester intermediate) is an active-site residue. K163 and S192 together coordinate substrate. Residue H235 is the Proton acceptor of the active site. E237 is a catalytic residue. Substrate is bound at residue R249.

This sequence belongs to the MetA family. In terms of assembly, homodimer.

Its subcellular location is the cytoplasm. The enzyme catalyses L-homoserine + succinyl-CoA = O-succinyl-L-homoserine + CoA. The protein operates within amino-acid biosynthesis; L-methionine biosynthesis via de novo pathway; O-succinyl-L-homoserine from L-homoserine: step 1/1. In terms of biological role, transfers a succinyl group from succinyl-CoA to L-homoserine, forming succinyl-L-homoserine. This Escherichia coli O157:H7 protein is Homoserine O-succinyltransferase.